The following is a 356-amino-acid chain: Histidinol-phosphate aminotransferase (356 aa).

An N6-(pyridoxal phosphate)lysine modification is found at Lys-214.

It belongs to the class-II pyridoxal-phosphate-dependent aminotransferase family. Histidinol-phosphate aminotransferase subfamily. As to quaternary structure, homodimer. Requires pyridoxal 5'-phosphate as cofactor.

It catalyses the reaction L-histidinol phosphate + 2-oxoglutarate = 3-(imidazol-4-yl)-2-oxopropyl phosphate + L-glutamate. It functions in the pathway amino-acid biosynthesis; L-histidine biosynthesis; L-histidine from 5-phospho-alpha-D-ribose 1-diphosphate: step 7/9. This chain is Histidinol-phosphate aminotransferase, found in Escherichia coli O1:K1 / APEC.